The chain runs to 318 residues: Transaldolase (318 aa).

The active-site Schiff-base intermediate with substrate is the Lys132.

The protein belongs to the transaldolase family. Type 1 subfamily. In terms of assembly, homodimer.

The protein resides in the cytoplasm. It catalyses the reaction D-sedoheptulose 7-phosphate + D-glyceraldehyde 3-phosphate = D-erythrose 4-phosphate + beta-D-fructose 6-phosphate. Its pathway is carbohydrate degradation; pentose phosphate pathway; D-glyceraldehyde 3-phosphate and beta-D-fructose 6-phosphate from D-ribose 5-phosphate and D-xylulose 5-phosphate (non-oxidative stage): step 2/3. In terms of biological role, transaldolase is important for the balance of metabolites in the pentose-phosphate pathway. The polypeptide is Transaldolase (Shewanella baltica (strain OS223)).